Consider the following 288-residue polypeptide: Zinc finger protein 42 (288 aa).

Composition is skewed to basic and acidic residues over residues 1–11 (MNEQKMNEQMK) and 26–38 (ALDR…DEAR). The disordered stretch occupies residues 1-48 (MNEQKMNEQMKKTAKTSGQKGPGGRALDRLTLKQDEARPVQNTRVEAP). C2H2-type zinc fingers lie at residues 170-194 (LECP…MLVH), 199-221 (HVCA…FLVH), 227-251 (YQCT…IRIH), and 258-281 (VCPF…ILTH). Glycyl lysine isopeptide (Lys-Gly) (interchain with G-Cter in ubiquitin) cross-links involve residues Lys-213 and Lys-215.

Belongs to the krueppel C2H2-type zinc-finger protein family. Post-translationally, polyubiquitinated by RNF12, leading to proteasomal degradation. As to expression, restricted to testis, to germ cells in the early stages of spermatogenesis. Not expressed in spermatids, nor spermatozoa. Expressed in embryonic stem (ES) cells.

The protein localises to the nucleus. Its function is as follows. Involved in the reprogramming of X-chromosome inactivation during the acquisition of pluripotency. Required for efficient elongation of TSIX, a non-coding RNA antisense to XIST. Binds DXPas34 enhancer within the TSIX promoter. Involved in ES cell self-renewal. The polypeptide is Zinc finger protein 42 (Zfp42) (Mus musculus (Mouse)).